A 348-amino-acid polypeptide reads, in one-letter code: Ferredoxin--NADP reductase (348 aa).

FAD contacts are provided by T25, E44, Q52, Y57, V97, F132, D298, and S339.

The protein belongs to the ferredoxin--NADP reductase type 2 family. In terms of assembly, homodimer. It depends on FAD as a cofactor.

It carries out the reaction 2 reduced [2Fe-2S]-[ferredoxin] + NADP(+) + H(+) = 2 oxidized [2Fe-2S]-[ferredoxin] + NADPH. The sequence is that of Ferredoxin--NADP reductase from Chlorobium phaeobacteroides (strain BS1).